A 703-amino-acid polypeptide reads, in one-letter code: Collagen alpha-2(VIII) chain (703 aa).

The N-terminal stretch at 1–28 is a signal peptide; the sequence is MLGTLTPLSSLLLLLLVLVLGCGPRASS. The interval 29–76 is nonhelical region (NC2); sequence GGGAGGAAGYAPVKYIQPMQKGPVGPPFREGKGQYLEMPLPLLPMDLK. The interval 70 to 544 is disordered; that stretch reads LLPMDLKGEP…AFDETGIAGL (475 aa). The tract at residues 77–536 is triple-helical region; the sequence is GEPGPPGKPG…PGPPGAPGAF (460 aa). Residues 79-97 show a composition bias toward pro residues; it reads PGPPGKPGPRGPPGPPGFP. Positions 166–192 are enriched in low complexity; it reads PSGITIPGKPGAQGVPGPPGFQGEPGP. Gly residues predominate over residues 206–224; it reads GDNGVGQPGLPGAPGQGGA. Composition is skewed to low complexity over residues 265-275 and 285-297; these read EPGAVGPKGPP and AAGL…PSGA. A compositionally biased stretch (gly residues) spans 433 to 442; it reads GRPGGPGVAG. Composition is skewed to low complexity over residues 444–462 and 476–486; these read LGQK…RGPS and PQGLPGLKGEP. Over residues 506 to 532 the composition is skewed to pro residues; the sequence is TGPPGVPGSPGITGPPGPPGPPGPPGA. The tract at residues 537 to 703 is nonhelical region (NC1); the sequence is DETGIAGLHL…SFSGFLLCPT (167 aa). Residues 570–703 enclose the C1q domain; sequence SAHATPAFTA…SFSGFLLCPT (134 aa).

In terms of assembly, homotrimers, or heterotrimers in association with alpha 2(VIII) type collagens. Four homotrimers can form a tetrahedron stabilized by central interacting C-terminal NC1 trimers. Proteolytically cleaved by neutrophil elastase, in vitro. Post-translationally, prolines at the third position of the tripeptide repeating unit (G-X-Y) are hydroxylated in some or all of the chains. As to expression, expressed primarily in the subendothelium of large blood vessels. Also expressed in arterioles and venules in muscle, heart, kidney, spleen, umbilical cord, liver and lung and is also found in connective tissue layers around hair follicles, around nerve bundles in muscle, in the dura of the optic nerve, in cornea and sclera, and in the perichondrium of cartilaginous tissues. In the kidney, expressed in mesangial cells, glomerular endothelial cells, and tubular epithelial cells. Also expressed in mast cells, and in astrocytes during the repair process. Expressed in Descemet's membrane.

It localises to the secreted. The protein resides in the extracellular space. Its subcellular location is the extracellular matrix. It is found in the basement membrane. Its function is as follows. Macromolecular component of the subendothelium. Major component of the Descemet's membrane (basement membrane) of corneal endothelial cells. Also a component of the endothelia of blood vessels. Necessary for migration and proliferation of vascular smooth muscle cells and thus, has a potential role in the maintenance of vessel wall integrity and structure, in particular in atherogenesis. This chain is Collagen alpha-2(VIII) chain (COL8A2), found in Homo sapiens (Human).